Consider the following 311-residue polypeptide: Homoserine kinase (311 aa).

P96 to A106 serves as a coordination point for ATP.

It belongs to the GHMP kinase family. Homoserine kinase subfamily.

It localises to the cytoplasm. The enzyme catalyses L-homoserine + ATP = O-phospho-L-homoserine + ADP + H(+). The protein operates within amino-acid biosynthesis; L-threonine biosynthesis; L-threonine from L-aspartate: step 4/5. Functionally, catalyzes the ATP-dependent phosphorylation of L-homoserine to L-homoserine phosphate. In Natranaerobius thermophilus (strain ATCC BAA-1301 / DSM 18059 / JW/NM-WN-LF), this protein is Homoserine kinase.